A 428-amino-acid polypeptide reads, in one-letter code: Serine--tRNA ligase (428 aa).

Residue T231–E233 participates in L-serine binding. An ATP-binding site is contributed by R262 to E264. An L-serine-binding site is contributed by E285. E349–S352 lines the ATP pocket. S385 contacts L-serine.

It belongs to the class-II aminoacyl-tRNA synthetase family. Type-1 seryl-tRNA synthetase subfamily. Homodimer. The tRNA molecule binds across the dimer.

The protein resides in the cytoplasm. The catalysed reaction is tRNA(Ser) + L-serine + ATP = L-seryl-tRNA(Ser) + AMP + diphosphate + H(+). The enzyme catalyses tRNA(Sec) + L-serine + ATP = L-seryl-tRNA(Sec) + AMP + diphosphate + H(+). The protein operates within aminoacyl-tRNA biosynthesis; selenocysteinyl-tRNA(Sec) biosynthesis; L-seryl-tRNA(Sec) from L-serine and tRNA(Sec): step 1/1. Catalyzes the attachment of serine to tRNA(Ser). Is also able to aminoacylate tRNA(Sec) with serine, to form the misacylated tRNA L-seryl-tRNA(Sec), which will be further converted into selenocysteinyl-tRNA(Sec). The polypeptide is Serine--tRNA ligase (Staphylococcus haemolyticus (strain JCSC1435)).